A 312-amino-acid polypeptide reads, in one-letter code: Glycine--tRNA ligase alpha subunit (312 aa).

The protein belongs to the class-II aminoacyl-tRNA synthetase family. In terms of assembly, tetramer of two alpha and two beta subunits.

It localises to the cytoplasm. The catalysed reaction is tRNA(Gly) + glycine + ATP = glycyl-tRNA(Gly) + AMP + diphosphate. In Buchnera aphidicola subsp. Acyrthosiphon pisum (strain APS) (Acyrthosiphon pisum symbiotic bacterium), this protein is Glycine--tRNA ligase alpha subunit (glyQ).